We begin with the raw amino-acid sequence, 472 residues long: Protein c-ets-2-B (472 aa).

Positions 85–170 (DTFNGFAKER…EHLEEMMKEY (86 aa)) constitute a PNT domain. The ETS DNA-binding region spans 366-446 (IQLWQFLLEL…SGKRYVYRFV (81 aa)).

This sequence belongs to the ETS family.

The protein resides in the nucleus. Functionally, probable transcription factor. The protein is Protein c-ets-2-B (ets2-b) of Xenopus laevis (African clawed frog).